Here is a 279-residue protein sequence, read N- to C-terminus: Probable endonuclease 4 (279 aa).

Histidine 69, histidine 109, glutamate 145, aspartate 179, histidine 182, histidine 216, aspartate 229, histidine 231, and glutamate 261 together coordinate Zn(2+).

Belongs to the AP endonuclease 2 family. The cofactor is Zn(2+).

It catalyses the reaction Endonucleolytic cleavage to 5'-phosphooligonucleotide end-products.. Endonuclease IV plays a role in DNA repair. It cleaves phosphodiester bonds at apurinic or apyrimidinic (AP) sites, generating a 3'-hydroxyl group and a 5'-terminal sugar phosphate. The chain is Probable endonuclease 4 from Serratia proteamaculans (strain 568).